We begin with the raw amino-acid sequence, 334 residues long: MRIVINGFGRIGRLVLRQILKRNSPIEVVAINDLVAGDLLTYLFKYDSTHGSFAPQATFSDGCLVMGERKIRFLAEKDVQKLPWKDLDVDVVVESTGLFVNRDDAAKHLDSGAKRVLITAPAKGDVPTFVMGVNHQQFDPADVIISNASCTTNCLAPLAKVLLDNFGIEEGLMTTVHAATATQSVVDGPSRKDWRGGRGAFQNIIPASTGAAKAVGLCLPELKGKLTGMAFRVPVADVSVVDLTVKLSSATTYEAICEAVKHAANTSMKNIMYYTEEAVVSSDFIGCEYSSIFDAQAGVALNDRFFKLVAWYDNEIGYATRIVDLLEYVQENSK.

NAD(+) contacts are provided by residues 10–11 (RI), aspartate 33, lysine 77, and threonine 119. D-glyceraldehyde 3-phosphate contacts are provided by residues 149–151 (SCT), threonine 180, 209–210 (TG), and arginine 232. Residue cysteine 150 is the Nucleophile of the active site. Asparagine 314 contacts NAD(+).

Belongs to the glyceraldehyde-3-phosphate dehydrogenase family. As to quaternary structure, homotetramer.

It localises to the cytoplasm. The enzyme catalyses D-glyceraldehyde 3-phosphate + phosphate + NAD(+) = (2R)-3-phospho-glyceroyl phosphate + NADH + H(+). It functions in the pathway carbohydrate degradation; glycolysis; pyruvate from D-glyceraldehyde 3-phosphate: step 1/5. In terms of biological role, catalyzes the oxidative phosphorylation of glyceraldehyde 3-phosphate (G3P) to 1,3-bisphosphoglycerate (BPG) using the cofactor NAD. The first reaction step involves the formation of a hemiacetal intermediate between G3P and a cysteine residue, and this hemiacetal intermediate is then oxidized to a thioester, with concomitant reduction of NAD to NADH. The reduced NADH is then exchanged with the second NAD, and the thioester is attacked by a nucleophilic inorganic phosphate to produce BPG. The polypeptide is Glyceraldehyde-3-phosphate dehydrogenase (gap) (Chlamydia trachomatis serovar L2 (strain ATCC VR-902B / DSM 19102 / 434/Bu)).